A 1170-amino-acid polypeptide reads, in one-letter code: Chromosome partition protein Smc (1170 aa).

Position 32-39 (proline 32–asparagine 39) interacts with ATP. 3 coiled-coil regions span residues glycine 169–alanine 215, aspartate 245–alanine 365, and glutamate 401–lysine 508. The SMC hinge domain occupies alanine 520–alanine 623. Coiled coils occupy residues glutamine 664–leucine 944 and glutamate 983–threonine 1020.

This sequence belongs to the SMC family. As to quaternary structure, homodimer.

The protein localises to the cytoplasm. Required for chromosome condensation and partitioning. This is Chromosome partition protein Smc from Burkholderia pseudomallei (strain 1710b).